Consider the following 674-residue polypeptide: Inorganic pyrophosphatase TTM2 (674 aa).

The CYTH domain occupies 248 to 410 (SPTYILKSRK…PRTYIEQIQL (163 aa)). Disordered regions lie at residues 457–498 (KNLK…SPAN) and 619–640 (RSRLARTGSSNSGNRGRSSKSS). The span at 484-496 (SDRRYEERNHDSP) shows a compositional bias: basic and acidic residues. The segment covering 623–640 (ARTGSSNSGNRGRSSKSS) has biased composition (low complexity). Residues 650–670 (LPLVLTVAICSIGIIVIKSYI) traverse the membrane as a helical segment.

It depends on Mg(2+) as a cofactor. Predominantly expressed in the shoot apices of inflorescences.

The protein resides in the mitochondrion outer membrane. It carries out the reaction diphosphate + H2O = 2 phosphate + H(+). Functionally, exhibits pyrophosphatase activity with stronger affinity for pyrophosphate (PPi), moderate affinity for ATP and ADP, and weak affinity for tripolyphosphate (PPPi). No activity observed toward uridine substrate. Negative regulator of the salicylic acid (SA)-mediated amplification of defense responses against both virulent and avirulent pathogens, including oomycetes (e.g. H.arabidopsidis) and bacteria (e.g. P.syringae). Represses systemic acquired resistance (SAR). This is Inorganic pyrophosphatase TTM2 from Arabidopsis thaliana (Mouse-ear cress).